Here is a 313-residue protein sequence, read N- to C-terminus: Ribosomal RNA small subunit methyltransferase H (313 aa).

Residues 35-37 (GGH), Asp-55, Phe-79, Asp-100, and Gln-107 each bind S-adenosyl-L-methionine.

This sequence belongs to the methyltransferase superfamily. RsmH family.

It is found in the cytoplasm. The enzyme catalyses cytidine(1402) in 16S rRNA + S-adenosyl-L-methionine = N(4)-methylcytidine(1402) in 16S rRNA + S-adenosyl-L-homocysteine + H(+). In terms of biological role, specifically methylates the N4 position of cytidine in position 1402 (C1402) of 16S rRNA. This Burkholderia ambifaria (strain MC40-6) protein is Ribosomal RNA small subunit methyltransferase H.